We begin with the raw amino-acid sequence, 487 residues long: Protein DETOXIFICATION 10 (487 aa).

12 helical membrane-spanning segments follow: residues 35–55 (LICF…IQII), 73–93 (FAVS…SCAL), 122–142 (LVCL…VILG), 155–175 (AAWL…IRYF), 184–204 (LLVT…LLVY), 211–231 (IGGA…LGSF), 264–284 (AAML…SGLL), 293–313 (VLSI…AIAA), 333–353 (IVVY…SMSL), 377–397 (MAPL…LSGV), 412–432 (FGAF…WVHL), and 435–455 (VGLW…LALV).

It belongs to the multi antimicrobial extrusion (MATE) (TC 2.A.66.1) family.

Its subcellular location is the membrane. The chain is Protein DETOXIFICATION 10 from Arabidopsis thaliana (Mouse-ear cress).